Reading from the N-terminus, the 262-residue chain is Large ribosomal subunit protein uL10m (262 aa).

A mitochondrion-targeting transit peptide spans 1–28 (MAAAVAGILRGGLPPRAAWLPTLQTVRH). Positions 243-262 (GDCATSANEKLHPPDPAPDA) are disordered.

This sequence belongs to the universal ribosomal protein uL10 family. In terms of assembly, component of the mitochondrial ribosome large subunit (39S) which comprises a 16S rRNA and about 50 distinct proteins.

It is found in the mitochondrion. In Mus musculus (Mouse), this protein is Large ribosomal subunit protein uL10m (Mrpl10).